Reading from the N-terminus, the 39-residue chain is MKLLIVLTCISLCSCICTVVQRCASNKPHVLEDPCKVQH.

Residues 1–15 (MKLLIVLTCISLCSC) form the signal peptide. Positions 16–39 (ICTVVQRCASNKPHVLEDPCKVQH) constitute an SARS ORF8 Ig-like domain.

The sequence is that of ORF8a protein from Homo sapiens (Human).